We begin with the raw amino-acid sequence, 326 residues long: Probable cell division protein WhiA (326 aa).

The H-T-H motif DNA-binding region spans 275-308; that stretch reads SLEELGQLAEPPMTKDAVAGRIRRLLAMADKRAR.

It belongs to the WhiA family.

Involved in cell division and chromosome segregation. The polypeptide is Probable cell division protein WhiA (Saccharopolyspora erythraea (strain ATCC 11635 / DSM 40517 / JCM 4748 / NBRC 13426 / NCIMB 8594 / NRRL 2338)).